The chain runs to 259 residues: Probable metal transport system ATP-binding protein TC_0339 (259 aa).

The ABC transporter domain occupies 9–241; the sequence is WAVDDLCVNY…AIFQAYGCEL (233 aa). 41-48 contributes to the ATP binding site; the sequence is GPNGAGKS.

It belongs to the ABC transporter superfamily.

Its subcellular location is the cell inner membrane. Its function is as follows. Part of an ATP-driven transport system TC_0338/TC_0339/TC_0341/TC_0342 for a metal. Probably responsible for energy coupling to the transport system. The polypeptide is Probable metal transport system ATP-binding protein TC_0339 (Chlamydia muridarum (strain MoPn / Nigg)).